Here is a 341-residue protein sequence, read N- to C-terminus: G2/mitotic-specific cyclin C13-1 (341 aa).

The protein belongs to the cyclin family. Cyclin AB subfamily.

Functionally, essential for the control of the cell cycle at the G2/M (mitosis) transition. Interacts with the CDC2 and CDK2 protein kinases to form MPF. G2/M cyclins accumulate steadily during G2 and are abruptly destroyed at mitosis. The sequence is that of G2/mitotic-specific cyclin C13-1 from Daucus carota (Wild carrot).